The chain runs to 677 residues: Methionine--tRNA ligase (677 aa).

The 'HIGH' region motif lies at 15–25 (PYANGSIHLGH). Zn(2+) contacts are provided by Cys-146, Cys-149, Cys-159, and Cys-162. A 'KMSKS' region motif is present at residues 333 to 337 (KMSKS). Lys-336 contacts ATP. The 103-residue stretch at 575–677 (DFAKVDLRVA…AGAKPGHQVK (103 aa)) folds into the tRNA-binding domain.

It belongs to the class-I aminoacyl-tRNA synthetase family. MetG type 1 subfamily. In terms of assembly, homodimer. Zn(2+) serves as cofactor.

It localises to the cytoplasm. The enzyme catalyses tRNA(Met) + L-methionine + ATP = L-methionyl-tRNA(Met) + AMP + diphosphate. Its function is as follows. Is required not only for elongation of protein synthesis but also for the initiation of all mRNA translation through initiator tRNA(fMet) aminoacylation. The sequence is that of Methionine--tRNA ligase from Escherichia coli O81 (strain ED1a).